The primary structure comprises 420 residues: UDP-N-acetylglucosamine 1-carboxyvinyltransferase (420 aa).

Residue 22–23 (KN) participates in phosphoenolpyruvate binding. R93 contacts UDP-N-acetyl-alpha-D-glucosamine. The active-site Proton donor is the C117. The residue at position 117 (C117) is a 2-(S-cysteinyl)pyruvic acid O-phosphothioketal. The UDP-N-acetyl-alpha-D-glucosamine site is built by D307 and V329.

The protein belongs to the EPSP synthase family. MurA subfamily.

The protein resides in the cytoplasm. It carries out the reaction phosphoenolpyruvate + UDP-N-acetyl-alpha-D-glucosamine = UDP-N-acetyl-3-O-(1-carboxyvinyl)-alpha-D-glucosamine + phosphate. It participates in cell wall biogenesis; peptidoglycan biosynthesis. In terms of biological role, cell wall formation. Adds enolpyruvyl to UDP-N-acetylglucosamine. This is UDP-N-acetylglucosamine 1-carboxyvinyltransferase from Marinobacter nauticus (strain ATCC 700491 / DSM 11845 / VT8) (Marinobacter aquaeolei).